The following is a 97-amino-acid chain: Type VII secretion system extracellular protein A (97 aa).

A coiled-coil region spans residues 61–93 (KVEKFAQLLEEIKQQLNSTADAVQEQDQQLSNN).

It belongs to the WXG100 family. sagEsxA-like subfamily. Forms both homodimers and heterodimers with EsxC.

The protein resides in the secreted. Functionally, virulence factor that is important for the establishment of infection in the host. EsxA is required for EsxB synthesis as well as secretion. Modulates host cell apoptotic pathways and mediates together with EsxB the release of S.aureus from the host cell. By acting on apoptosis, plays a role in the modulation of dendritic cell-mediated immunity. In Staphylococcus aureus (strain USA300), this protein is Type VII secretion system extracellular protein A.